The following is a 348-amino-acid chain: Probable dual-specificity RNA methyltransferase RlmN (348 aa).

Glu-93 acts as the Proton acceptor in catalysis. The region spanning 99–333 is the Radical SAM core domain; it reads TEKRLTACLS…VSLRKSRGLD (235 aa). Cys-106 and Cys-338 are disulfide-bonded. [4Fe-4S] cluster-binding residues include Cys-113, Cys-117, and Cys-120. S-adenosyl-L-methionine-binding positions include 160 to 161, Ser-190, 219 to 221, and Asn-295; these read GE and SLH. The active-site S-methylcysteine intermediate is Cys-338.

It belongs to the radical SAM superfamily. RlmN family. It depends on [4Fe-4S] cluster as a cofactor.

Its subcellular location is the cytoplasm. The catalysed reaction is adenosine(2503) in 23S rRNA + 2 reduced [2Fe-2S]-[ferredoxin] + 2 S-adenosyl-L-methionine = 2-methyladenosine(2503) in 23S rRNA + 5'-deoxyadenosine + L-methionine + 2 oxidized [2Fe-2S]-[ferredoxin] + S-adenosyl-L-homocysteine. It carries out the reaction adenosine(37) in tRNA + 2 reduced [2Fe-2S]-[ferredoxin] + 2 S-adenosyl-L-methionine = 2-methyladenosine(37) in tRNA + 5'-deoxyadenosine + L-methionine + 2 oxidized [2Fe-2S]-[ferredoxin] + S-adenosyl-L-homocysteine. Its function is as follows. Specifically methylates position 2 of adenine 2503 in 23S rRNA and position 2 of adenine 37 in tRNAs. This chain is Probable dual-specificity RNA methyltransferase RlmN, found in Prochlorococcus marinus (strain AS9601).